The primary structure comprises 305 residues: Aspartate carbamoyltransferase catalytic subunit (305 aa).

2 residues coordinate carbamoyl phosphate: R56 and T57. K84 lines the L-aspartate pocket. Residues R106, H136, and Q139 each contribute to the carbamoyl phosphate site. R169 and R221 together coordinate L-aspartate. Residues A262 and P263 each coordinate carbamoyl phosphate.

The protein belongs to the aspartate/ornithine carbamoyltransferase superfamily. ATCase family. In terms of assembly, heterododecamer (2C3:3R2) of six catalytic PyrB chains organized as two trimers (C3), and six regulatory PyrI chains organized as three dimers (R2).

The enzyme catalyses carbamoyl phosphate + L-aspartate = N-carbamoyl-L-aspartate + phosphate + H(+). It functions in the pathway pyrimidine metabolism; UMP biosynthesis via de novo pathway; (S)-dihydroorotate from bicarbonate: step 2/3. In terms of biological role, catalyzes the condensation of carbamoyl phosphate and aspartate to form carbamoyl aspartate and inorganic phosphate, the committed step in the de novo pyrimidine nucleotide biosynthesis pathway. This is Aspartate carbamoyltransferase catalytic subunit from Streptococcus sanguinis (strain SK36).